The following is a 392-amino-acid chain: MKTAARLDRIPPYLFAEIDRRRDEAVARGVDIINMGIGDPDKPTPPVVLEAMHAAIDDPSTHNYPPYKGTKAYREAAAAWFERRFGVGGFHPDTEVISSIGSKEAIHNTFLAFVDPGDYTLIPDPAYPVYRTSTIFAGGEFFAMPLLPENQLLPDLEAVPETVARKAKLLWLNYPNNPTGAVASLEFFEKVVHFAKKHDILVCHDNAYSEMAYDGYKPPSILQVPGARDVAIEFLSCSKAYNMTGWRVGFVIGNRTGIAGLGQVKTNIDSGVFKAIQQAAIAAFGLDDERLHALMAVYQNRRNIIVEGLRSLGWPLEAPKATLYVWAPIPKSFGSSVEFVGALLDKCGIIVPPGNGYGEHGEGFFRIALTVPDERMREAIGRMEAAGIRFEG.

Residues Tyr13 and Gly38 each contribute to the substrate site. Pyridoxal 5'-phosphate is bound by residues Tyr67, Ser102–Lys103, Tyr127, Asn177, Tyr208, and Ser236–Ser238. Substrate contacts are provided by Lys103, Tyr127, and Asn177. Lys239 carries the N6-(pyridoxal phosphate)lysine modification. Arg247 serves as a coordination point for pyridoxal 5'-phosphate. Arg366 provides a ligand contact to substrate.

This sequence belongs to the class-I pyridoxal-phosphate-dependent aminotransferase family. LL-diaminopimelate aminotransferase subfamily. Homodimer. Pyridoxal 5'-phosphate is required as a cofactor.

It carries out the reaction (2S,6S)-2,6-diaminopimelate + 2-oxoglutarate = (S)-2,3,4,5-tetrahydrodipicolinate + L-glutamate + H2O + H(+). It functions in the pathway amino-acid biosynthesis; L-lysine biosynthesis via DAP pathway; LL-2,6-diaminopimelate from (S)-tetrahydrodipicolinate (aminotransferase route): step 1/1. Functionally, involved in the synthesis of meso-diaminopimelate (m-DAP or DL-DAP), required for both lysine and peptidoglycan biosynthesis. Catalyzes the direct conversion of tetrahydrodipicolinate to LL-diaminopimelate. Can also use m-DAP instead of LL-DAP as the amino-group donor. The chain is LL-diaminopimelate aminotransferase from Gloeobacter violaceus (strain ATCC 29082 / PCC 7421).